A 219-amino-acid polypeptide reads, in one-letter code: Peptidyl-tRNA hydrolase (219 aa).

Y26 contributes to the tRNA binding site. H31 functions as the Proton acceptor in the catalytic mechanism. TRNA contacts are provided by Y78, N80, and N126.

Belongs to the PTH family. Monomer.

The protein localises to the cytoplasm. It catalyses the reaction an N-acyl-L-alpha-aminoacyl-tRNA + H2O = an N-acyl-L-amino acid + a tRNA + H(+). Its function is as follows. Hydrolyzes ribosome-free peptidyl-tRNAs (with 1 or more amino acids incorporated), which drop off the ribosome during protein synthesis, or as a result of ribosome stalling. Functionally, catalyzes the release of premature peptidyl moieties from peptidyl-tRNA molecules trapped in stalled 50S ribosomal subunits, and thus maintains levels of free tRNAs and 50S ribosomes. The polypeptide is Peptidyl-tRNA hydrolase (Trichodesmium erythraeum (strain IMS101)).